The following is a 431-amino-acid chain: Cleavage stimulation factor subunit 1 (431 aa).

WD repeat units lie at residues 106–145 (SHKG…AKSA), 171–210 (DHVD…AKRA), 215–254 (QEAE…CFVS), 260–301 (QHTD…TTFE), 303–343 (AHDG…TLVR), and 395–431 (GHNN…STTD).

Homodimer. The CSTF complex is composed of CSTF1 (50 kDa subunit), CSTF2 (64 kDa subunit) and CSTF3 (77 kDa subunit). Interacts (via repeats WD) directly with CSTF3. Interacts (via repeat WD6) with BARD1. Interacts with ERCC6.

It is found in the nucleus. Functionally, one of the multiple factors required for polyadenylation and 3'-end cleavage of mammalian pre-mRNAs. May be responsible for the interaction of CSTF with other factors to form a stable complex on the pre-mRNA. The sequence is that of Cleavage stimulation factor subunit 1 (Cstf1) from Mus musculus (Mouse).